Here is a 1345-residue protein sequence, read N- to C-terminus: DNA-directed RNA polymerase subunit beta (1345 aa).

This sequence belongs to the RNA polymerase beta chain family. The RNAP catalytic core consists of 2 alpha, 1 beta, 1 beta' and 1 omega subunit. When a sigma factor is associated with the core the holoenzyme is formed, which can initiate transcription.

It carries out the reaction RNA(n) + a ribonucleoside 5'-triphosphate = RNA(n+1) + diphosphate. DNA-dependent RNA polymerase catalyzes the transcription of DNA into RNA using the four ribonucleoside triphosphates as substrates. In Shewanella sp. (strain MR-4), this protein is DNA-directed RNA polymerase subunit beta.